Here is a 250-residue protein sequence, read N- to C-terminus: Aquaporin TIP1-1 (250 aa).

2 helical membrane passes run Phe24 to Phe44 and Ala56 to Gly76. Residues Asn85–Ala87 carry the NPA 1 motif. 3 helical membrane-spanning segments follow: residues Leu104–Gly126, Ala143–Val163, and Thr172–Phe192. An NPA 2 motif is present at residues Asn198–Ala200. The chain crosses the membrane as a helical span at residues Tyr218–Ile238.

This sequence belongs to the MIP/aquaporin (TC 1.A.8) family. TIP (TC 1.A.8.10) subfamily. As to expression, expressed in roots, shoots, leaves, tassels, ears and embryos. Expressed in meristems and zones of cell enlargement: tips of primary and lateral roots, leaf primordia, and male and female inflorescence meristems. Highly expressed in the root epidermis and endodermis, parenchyma cells surrounding mature xylem vessels in the root and the stem, phloem companion cells and a ring of cells around the phloem strand in the stem and the leaf sheath, and the basal endosperm transfer cells in developing kernels.

Its subcellular location is the vacuole membrane. In terms of biological role, water channel required to facilitate the transport of water across cell membrane. May support the rapid influx of water into vacuoles during cell expansion, permit osmotic equilibration between the cytosol and the vacuolar content and rapid transcellular water flow through living cells. Its function is impaired by Hg(2+). In Zea mays (Maize), this protein is Aquaporin TIP1-1 (TIP1-1).